A 131-amino-acid chain; its full sequence is Binder of sperm protein homolog 2 (131 aa).

Positions Met-1 to Ala-22 are cleaved as a signal peptide. Fibronectin type-II domains are found at residues Ile-35 to Ala-79 and Gln-80 to Pro-128. 4 cysteine pairs are disulfide-bonded: Cys-40-Cys-64, Cys-54-Cys-77, Cys-85-Cys-111, and Cys-99-Cys-126.

Belongs to the seminal plasma protein family. In terms of tissue distribution, epididymis.

The protein resides in the secreted. In terms of biological role, binds sperm in vitro but has no effect on sperm capacitation. Also binds gelatin and heparin, but not chondroitin sulfate B or phospholipid liposomes. In Mus musculus (Mouse), this protein is Binder of sperm protein homolog 2.